The chain runs to 426 residues: MTSSADLTNLKELLSLYKSLRFSDSAAIEKYNSLVEWGTSTYWKIGVQKVANVETSISDYYDEVKNKPFNIDPGYYIFLPVYFGSVFIYSKGKNMVELGSGNSFQIPDDMRSACNKVLDSDNGIDFLRFVLLNNRWIMEDAISKYQSPVNIFKLASEYGLNIPKYLEIEIEEDTLFDDELYSIIERSFDDKFPKISISYIKLGELRRQVVDFFKFSFMYIESIKVDRIGDNIFIPSVITKSGKKILVKDVDHLIRSKVREHTFVKVKKKNTFSILYDYDGNGTETRGEVIKRIIDTIGRDYYVNGKYFSKVGSAGLKQLTNKLDINECATVDELVDEINKSGTVKRKIKNQSAFDLSRECLGYPEADFITLVNNMRFKIENCKVVNFNIENTNCLNNPSIETIYRNFNQFVSIFNVVTDVKKRLFE.

This sequence belongs to the orthopoxvirus OPG148 family. Interacts with the DNA polymerase catalytic subunit OPG071. Interacts with UDG/OPG116. Component of the uracil-DNA glycosylase(UDG)-OPG148-polymerase complex; OPG148 and UDG form a heterodimeric processivity factor that associates with OPG071 to form the processive polymerase holoenzyme. Interacts with OPG117.

Plays an essential role in viral DNA replication by acting as the polymerase processivity factor together with protein OPG116. Serves as a bridge which links the DNA polymerase OPG071 and the uracil DNA glycosylase. This Vaccinia virus (strain Copenhagen) (VACV) protein is DNA polymerase processivity factor component OPG148 (OPG148).